The following is a 456-amino-acid chain: Signal recognition particle receptor FtsY (456 aa).

A compositionally biased stretch (basic and acidic residues) spans 1 to 26 (MFDGLKKKLNRFRNDVEETAEEKAEA). Residues 1–163 (MFDGLKKKLN…DEDDSSGPGR (163 aa)) are disordered. Over residues 27–39 (AADEAESDADAEA) the composition is skewed to acidic residues. Residues 40–62 (ESAPADTDNAAVEPEASEPAAAD) show a composition bias toward low complexity. The span at 63 to 81 (PDADAVGDADAGSEADAVD) shows a compositional bias: acidic residues. Positions 82–97 (AADAPADAESSSAAVE) are enriched in low complexity. The span at 112–134 (PDSEVDAGADTGDEPSGEPTADE) shows a compositional bias: acidic residues. GTP is bound by residues 265 to 272 (GINGVGKT), 347 to 351 (DTAGR), and 405 to 408 (TKAD).

Belongs to the GTP-binding SRP family. FtsY subfamily. In terms of assembly, part of the signal recognition particle protein translocation system, which is composed of SRP and FtsY.

The protein resides in the cell membrane. It is found in the cytoplasm. It carries out the reaction GTP + H2O = GDP + phosphate + H(+). In terms of biological role, involved in targeting and insertion of nascent membrane proteins into the cytoplasmic membrane. Acts as a receptor for the complex formed by the signal recognition particle (SRP) and the ribosome-nascent chain (RNC). This Haloferax volcanii (strain ATCC 29605 / DSM 3757 / JCM 8879 / NBRC 14742 / NCIMB 2012 / VKM B-1768 / DS2) (Halobacterium volcanii) protein is Signal recognition particle receptor FtsY.